Consider the following 395-residue polypeptide: Imidazolonepropionase (395 aa).

Positions 63 and 65 each coordinate Fe(3+). Zn(2+) contacts are provided by His-63 and His-65. 4-imidazolone-5-propanoate is bound by residues Arg-72, Tyr-135, and His-168. Residue Tyr-135 participates in N-formimidoyl-L-glutamate binding. Position 233 (His-233) interacts with Fe(3+). His-233 is a Zn(2+) binding site. Gln-236 is a binding site for 4-imidazolone-5-propanoate. Asp-308 contacts Fe(3+). Asp-308 lines the Zn(2+) pocket. N-formimidoyl-L-glutamate contacts are provided by Asn-310 and Gly-312. Thr-313 lines the 4-imidazolone-5-propanoate pocket.

It belongs to the metallo-dependent hydrolases superfamily. HutI family. Requires Zn(2+) as cofactor. The cofactor is Fe(3+).

It localises to the cytoplasm. It carries out the reaction 4-imidazolone-5-propanoate + H2O = N-formimidoyl-L-glutamate. The protein operates within amino-acid degradation; L-histidine degradation into L-glutamate; N-formimidoyl-L-glutamate from L-histidine: step 3/3. Its function is as follows. Catalyzes the hydrolytic cleavage of the carbon-nitrogen bond in imidazolone-5-propanoate to yield N-formimidoyl-L-glutamate. It is the third step in the universal histidine degradation pathway. The polypeptide is Imidazolonepropionase (Cereibacter sphaeroides (strain ATCC 17029 / ATH 2.4.9) (Rhodobacter sphaeroides)).